A 143-amino-acid polypeptide reads, in one-letter code: Nucleoside diphosphate kinase (143 aa).

ATP contacts are provided by Lys11, Phe59, Arg87, Thr93, Arg104, and Asn114. The active-site Pros-phosphohistidine intermediate is the His117.

This sequence belongs to the NDK family. As to quaternary structure, homotetramer. Mg(2+) is required as a cofactor.

The protein resides in the cytoplasm. It catalyses the reaction a 2'-deoxyribonucleoside 5'-diphosphate + ATP = a 2'-deoxyribonucleoside 5'-triphosphate + ADP. The catalysed reaction is a ribonucleoside 5'-diphosphate + ATP = a ribonucleoside 5'-triphosphate + ADP. Its function is as follows. Major role in the synthesis of nucleoside triphosphates other than ATP. The ATP gamma phosphate is transferred to the NDP beta phosphate via a ping-pong mechanism, using a phosphorylated active-site intermediate. The sequence is that of Nucleoside diphosphate kinase from Idiomarina loihiensis (strain ATCC BAA-735 / DSM 15497 / L2-TR).